A 231-amino-acid chain; its full sequence is Ribose-5-phosphate isomerase A (231 aa).

Substrate contacts are provided by residues 32–35 (TGST), 85–88 (DGAD), and 98–101 (KGGG). The active-site Proton acceptor is the glutamate 107. Lysine 125 provides a ligand contact to substrate.

It belongs to the ribose 5-phosphate isomerase family. Homodimer.

It catalyses the reaction aldehydo-D-ribose 5-phosphate = D-ribulose 5-phosphate. Its pathway is carbohydrate degradation; pentose phosphate pathway; D-ribose 5-phosphate from D-ribulose 5-phosphate (non-oxidative stage): step 1/1. Its function is as follows. Catalyzes the reversible conversion of ribose-5-phosphate to ribulose 5-phosphate. The polypeptide is Ribose-5-phosphate isomerase A (Burkholderia cenocepacia (strain ATCC BAA-245 / DSM 16553 / LMG 16656 / NCTC 13227 / J2315 / CF5610) (Burkholderia cepacia (strain J2315))).